Here is a 1499-residue protein sequence, read N- to C-terminus: Rap guanine nucleotide exchange factor 2 (1499 aa).

Disordered regions lie at residues 40–59 (HVSS…SSSL) and 68–101 (SEAG…SDPL). Residues 83-94 (VDSEDDDDEEDI) are compositionally biased toward acidic residues. A nucleoside 3',5'-cyclic phosphate is bound at residue 135–254 (AFANMTMSVR…VEEEGEIVMV (120 aa)). An N-terminal Ras-GEF domain is found at 267-380 (KGHIVIKGTS…RLLNIACAAK (114 aa)). A PDZ domain is found at 385-470 (LMTLTKPSRE…ITVKTNLFVF (86 aa)). Residue S501 is modified to Phosphoserine. A Ras-associating domain is found at 606-692 (PDQVLRVFKA…GRYYLKNNME (87 aa)). Phosphothreonine; by PLK2 is present on T644. The 228-residue stretch at 717–944 (STVEVATQLS…SQGSTNATVL (228 aa)) folds into the Ras-GEF domain. S806 is subject to Phosphoserine; by PLK2. At S930 the chain carries Phosphoserine. The residue at position 933 (S933) is a Phosphoserine; by PLK2. The disordered stretch occupies residues 1002-1050 (PATNTLPKNPGDKKPVKSETSPVAPRAGSQQKAQSLPQPQQQPPPAHKI). Phosphoserine is present on S1022. Residues 1031-1040 (QQKAQSLPQP) show a composition bias toward low complexity. Residues S1080, S1089, S1095, S1116, S1120, and S1159 each carry the phosphoserine modification. A disordered region spans residues 1095–1160 (SLERHKKQAE…RSSIVSNSSF (66 aa)). 2 stretches are compositionally biased toward low complexity: residues 1111–1125 (SSQL…QSSP) and 1141–1160 (SDSG…NSSF). At S1176 the chain carries Phosphoserine; by PLK2. Disordered regions lie at residues 1224–1256 (PSTE…SSGS) and 1305–1499 (TKYN…VSAV). 2 stretches are compositionally biased toward polar residues: residues 1247-1256 (GSWTSCSSGS) and 1307-1331 (YNRQ…SSTG). Positions 1355–1366 (EAESSSLTSVTT) are enriched in low complexity. Polar residues predominate over residues 1441–1462 (SSDTAGPSSVQQPHGHPTSSRP). Acidic residues predominate over residues 1488–1499 (TEEDEDEQVSAV).

Belongs to the RAPGEF2 family. As to quaternary structure, interacts with CDH1, CTNNB1 and TJP1. Interacts (via C-terminal domain) with MAGI2 (via PDZ and WW domains); the interaction occurs before or after NGF stimulation. Interacts with KIDINS220 and NTRK1; the interactions occur after NGF stimulation. Found in a complex, at least composed of KIDINS220, MAGI2, NTRK1 and RAPGEF2; the complex is mainly formed at late endosomes in a neuronal growth factor (NGF)-dependent manner. Interacts (via C-terminal domain) with NEDD4 (via WW domains); this interaction leads to ubiquitination and degradation via the proteasome pathway in a cAMP-independent manner. Interacts with MAGI1 isoform 3 (via PDZ domain). Interacts with ADRB1 (via C-terminal PDZ motif); the interaction is direct. Interacts (via Ras-associating domain) with RAP1A (via GTP-bound active form). Interacts weakly with HRAS (via GDP- and GTP-bound forms). Interacts (via C-terminal domain) with MAGI2 (via PDZ and WW domains). In terms of processing, ubiquitinated by NEDD4, leading to proteasomal degradation. Post-translationally, phosphorylation by PLK2 promotes its activity. Expressed in primary neuronal and endocrine cells (at protein level). Highest expression levels in brain. Lower expression levels in heart, kidney, lung, placenta and blood leukocytes.

The protein resides in the cytoplasm. It localises to the perinuclear region. It is found in the cell membrane. Its subcellular location is the late endosome. The protein localises to the cell junction. Its function is as follows. Functions as a guanine nucleotide exchange factor (GEF), which activates Rap and Ras family of small GTPases by exchanging bound GDP for free GTP in a cAMP-dependent manner. Serves as a link between cell surface receptors and Rap/Ras GTPases in intracellular signaling cascades. Also acts as an effector for Rap1 by direct association with Rap1-GTP thereby leading to the amplification of Rap1-mediated signaling. Shows weak activity on HRAS. It is controversial whether RAPGEF2 binds cAMP and cGMP or not. Its binding to ligand-activated beta-1 adrenergic receptor ADRB1 leads to the Ras activation through the G(s)-alpha signaling pathway. Involved in the cAMP-induced Ras and Erk1/2 signaling pathway that leads to sustained inhibition of long term melanogenesis by reducing dendrite extension and melanin synthesis. Also provides inhibitory signals for cell proliferation of melanoma cells and promotes their apoptosis in a cAMP-independent nanner. Regulates cAMP-induced neuritogenesis by mediating the Rap1/B-Raf/ERK signaling through a pathway that is independent on both PKA and RAPGEF3/RAPGEF4. Involved in neuron migration and in the formation of the major forebrain fiber connections forming the corpus callosum, the anterior commissure and the hippocampal commissure during brain development. Involved in neuronal growth factor (NGF)-induced sustained activation of Rap1 at late endosomes and in brain-derived neurotrophic factor (BDNF)-induced axon outgrowth of hippocampal neurons. Plays a role in the regulation of embryonic blood vessel formation and in the establishment of basal junction integrity and endothelial barrier function. May be involved in the regulation of the vascular endothelial growth factor receptor KDR and cadherin CDH5 expression at allantois endothelial cell-cell junctions. The protein is Rap guanine nucleotide exchange factor 2 (RAPGEF2) of Homo sapiens (Human).